A 360-amino-acid chain; its full sequence is Small ribosomal subunit protein mS22 (360 aa).

Residue serine 54 is modified to Phosphoserine. Lysine 211 carries the post-translational modification N6-acetyllysine.

It belongs to the mitochondrion-specific ribosomal protein mS22 family. Component of the mitochondrial small ribosomal subunit (mt-SSU). Mature mammalian 55S mitochondrial ribosomes consist of a small (28S) and a large (39S) subunit. The 28S small subunit contains a 12S ribosomal RNA (12S mt-rRNA) and 30 different proteins. The 39S large subunit contains a 16S rRNA (16S mt-rRNA), a copy of mitochondrial valine transfer RNA (mt-tRNA(Val)), which plays an integral structural role, and 52 different proteins.

Its subcellular location is the mitochondrion. The chain is Small ribosomal subunit protein mS22 (MRPS22) from Homo sapiens (Human).